Here is a 456-residue protein sequence, read N- to C-terminus: MLDIHLLRTQLDHVARLLAERNYVFPLAEFSALEAERKNLQTSTQELQARRNGASKQIGNAKSRGEDASAILAEVAHLGDELKQAESRLDQVQAALQHILLQIPNLPHSSVPEGRSESDNREVRRWGTPPTFDFSPADHVSIGERLGLLDFPTAAKISGARFSLLTGSLAHLHRALAQFMLDVHVREHGYTETYVPYLVNAESLRGTGQLPKFKEDLFEVPRRKTAEPFLENQPVAATLPSNSNSPQGGQDDDDLYLIPTSEVPLSNIVRDRIVDPELLPIKLTAHTPCFRSEAGSYGRDTRGMIRQHQFEKVELVQIVHPAHSYKALEELTGHAEAILQKLKLPYRVMALCTADMGFAAAKTYDIEVWLPQQGTYREISSCSNCEAFQARRMQARFRNEKGKPELLHTLNGSGLAVGRTLVAILENFQNADGSVSIPKVLQGYMGGTERLVPHNA.

2 disordered regions span residues Pro107–Pro130 and Phe229–Asp253. Residues Gly114 to Arg125 are compositionally biased toward basic and acidic residues. Positions Leu239–Gly248 are enriched in polar residues. Residue Thr260–Glu262 coordinates L-serine. Arg291 to Glu293 serves as a coordination point for ATP. Residue Glu314 participates in L-serine binding. Glu378–Ser381 is a binding site for ATP. Ser413 contributes to the L-serine binding site.

This sequence belongs to the class-II aminoacyl-tRNA synthetase family. Type-1 seryl-tRNA synthetase subfamily. In terms of assembly, homodimer. The tRNA molecule binds across the dimer.

The protein localises to the cytoplasm. The enzyme catalyses tRNA(Ser) + L-serine + ATP = L-seryl-tRNA(Ser) + AMP + diphosphate + H(+). It catalyses the reaction tRNA(Sec) + L-serine + ATP = L-seryl-tRNA(Sec) + AMP + diphosphate + H(+). Its pathway is aminoacyl-tRNA biosynthesis; selenocysteinyl-tRNA(Sec) biosynthesis; L-seryl-tRNA(Sec) from L-serine and tRNA(Sec): step 1/1. In terms of biological role, catalyzes the attachment of serine to tRNA(Ser). Is also able to aminoacylate tRNA(Sec) with serine, to form the misacylated tRNA L-seryl-tRNA(Sec), which will be further converted into selenocysteinyl-tRNA(Sec). The polypeptide is Serine--tRNA ligase (Nitrosospira multiformis (strain ATCC 25196 / NCIMB 11849 / C 71)).